The chain runs to 179 residues: Large ribosomal subunit protein uL5 (179 aa).

It belongs to the universal ribosomal protein uL5 family. As to quaternary structure, part of the 50S ribosomal subunit; part of the 5S rRNA/L5/L18/L25 subcomplex. Contacts the 5S rRNA and the P site tRNA. Forms a bridge to the 30S subunit in the 70S ribosome.

Functionally, this is one of the proteins that bind and probably mediate the attachment of the 5S RNA into the large ribosomal subunit, where it forms part of the central protuberance. In the 70S ribosome it contacts protein S13 of the 30S subunit (bridge B1b), connecting the 2 subunits; this bridge is implicated in subunit movement. Contacts the P site tRNA; the 5S rRNA and some of its associated proteins might help stabilize positioning of ribosome-bound tRNAs. The protein is Large ribosomal subunit protein uL5 of Shewanella loihica (strain ATCC BAA-1088 / PV-4).